Consider the following 142-residue polypeptide: Hemoglobin subunit alpha (142 aa).

Ser-1 is subject to N-acetylserine. One can recognise a Globin domain in the interval Ser-1–Arg-142. His-59 is a binding site for O2. Position 88 (His-88) interacts with heme b.

It belongs to the globin family. In terms of assembly, heterotetramer of two alpha chains and two beta chains. In terms of tissue distribution, red blood cells.

Its function is as follows. Involved in oxygen transport from gills to the various peripheral tissues. In Pagothenia borchgrevinki (Bald rockcod), this protein is Hemoglobin subunit alpha (hba).